The primary structure comprises 327 residues: Gonadotropin-releasing hormone receptor (327 aa).

The Extracellular portion of the chain corresponds to 1-38; that stretch reads MANNASLEQDQNHCSAINNSIPLTQGKLPTLTLSGKIR. N4 and N18 each carry an N-linked (GlcNAc...) asparagine glycan. A helical membrane pass occupies residues 39 to 58; the sequence is VTVTFFLFLLSTAFNASFLV. Residues 59-77 are Cytoplasmic-facing; that stretch reads KLQRWTQKRKKGKKLSRMK. The chain crosses the membrane as a helical span at residues 78 to 97; it reads VLLKHLTLANLLETLIVMPL. At 98 to 115 the chain is on the extracellular side; it reads DGMWNITVQWYAGEFLCK. A glycan (N-linked (GlcNAc...) asparagine) is linked at N102. A disulfide bond links C114 and C195. A helical membrane pass occupies residues 116 to 137; sequence VLSYLKLFSMYAPAFMMVVISL. Residues 138-164 lie on the Cytoplasmic side of the membrane; sequence DRSLAVTQPLAVQSKSKLERSMTSLAW. Residues 165–184 form a helical membrane-spanning segment; that stretch reads ILSIVFAGPQLYIFRMIYLA. At 185 to 211 the chain is on the extracellular side; it reads DGSGPAVFSQCVTHCSFPQWWHEAFYN. Residues 212-231 traverse the membrane as a helical segment; that stretch reads FFTFSCLFIIPLLIMLICNA. Residues 232-280 are Cytoplasmic-facing; it reads KIIFALTRVLHQDPRKLQLNQSKNNIPRARLRTLKMTVAFGTSFVICWT. A helical transmembrane segment spans residues 281-299; it reads PYYVLGIWYWFDPEMLNRV. Residues 300–305 lie on the Extracellular side of the membrane; it reads SEPVNH. A helical transmembrane segment spans residues 306–325; the sequence is FFFLFAFLNPCFDPLIYGYF. Topologically, residues 326–327 are cytoplasmic; the sequence is SL.

It belongs to the G-protein coupled receptor 1 family.

It is found in the cell membrane. Its function is as follows. Receptor for gonadotropin releasing hormone (GnRH) that mediates the action of GnRH to stimulate the secretion of the gonadotropic hormones luteinizing hormone (LH) and follicle-stimulating hormone (FSH). This receptor mediates its action by association with G-proteins that activate a phosphatidylinositol-calcium second messenger system. In Rattus norvegicus (Rat), this protein is Gonadotropin-releasing hormone receptor (Gnrhr).